The chain runs to 742 residues: CD44 antigen (742 aa).

Residues 1–20 (MDKFWWHAAWGLCLVPLSLA) form the signal peptide. Residues 21 to 649 (QIDLNITCRF…GPIRTPQIPE (629 aa)) are Extracellular-facing. N-linked (GlcNAc...) asparagine glycosylation is present at N25. Disulfide bonds link C28–C129, C53–C118, and C77–C97. The 89-residue stretch at 32–120 (GVFHVEKNGR…TSQYDTYCFN (89 aa)) folds into the Link domain. Hyaluronan is bound at residue R41. A glycan (N-linked (GlcNAc...) asparagine) is linked at N57. 2 residues coordinate hyaluronan: R78 and Y79. N100 carries N-linked (GlcNAc...) asparagine glycosylation. Y105 contributes to the hyaluronan binding site. N-linked (GlcNAc...) asparagine glycosylation is found at N110 and N120. Disordered regions lie at residues 160-189 (EYRT…RSST) and 261-285 (TTQM…NEDE). Positions 179-189 (SSGSSSERSST) are enriched in low complexity. S180 carries O-linked (Xyl...) (chondroitin sulfate) serine glycosylation. The stem stretch occupies residues 224 to 649 (LMSTSATATE…GPIRTPQIPE (426 aa)). Polar residues predominate over residues 261-273 (TTQMAGTSSNTIS). N-linked (GlcNAc...) asparagine glycosylation occurs at N350. Disordered regions lie at residues 372-558 (HHEE…TLLE) and 590-642 (TVGD…SGPI). The segment covering 386–396 (QATPSSTTEET) has biased composition (low complexity). The span at 407–421 (RWHEGYRQTPKEDSH) shows a compositional bias: basic and acidic residues. Over residues 422–435 (STTGTAAASAHTSH) the composition is skewed to low complexity. Polar residues-rich tracts occupy residues 439 to 452 (GRTT…SWTD) and 476 to 489 (SHSI…NPNT). A compositionally biased stretch (low complexity) spans 502 to 516 (SMTTQQSNSQSFSTS). Polar residues predominate over residues 528–539 (TTSTLTSSNRND). 2 N-linked (GlcNAc...) asparagine glycosylation sites follow: N548 and N599. Residues 592 to 606 (GDSNSNVNRSLSGDQ) show a composition bias toward polar residues. Over residues 619–629 (HGSESDGHSHG) the composition is skewed to basic and acidic residues. N-linked (GlcNAc...) asparagine glycosylation occurs at N636. The chain crosses the membrane as a helical span at residues 650-670 (WLIILASLLALALILAVCIAV). Residues 671–742 (NSRRRCGQKK…LQNVDMKIGV (72 aa)) lie on the Cytoplasmic side of the membrane. Phosphoserine; by PKC is present on S672. The required for interaction with EZR, MSN and RDX and for co-localization to microvilli stretch occupies residues 673–691 (RRRCGQKKKLVINSGNGAV). Phosphoserine occurs at positions 686, 697, and 706.

In terms of assembly, interacts with PKN2. Interacts with TIAM1 and TIAM2. Interacts with HA, as well as other glycosaminoglycans, collagen, laminin, and fibronectin via its N-terminal segment. Interacts with UNC119. Interacts with PDPN (via extracellular domain); this interaction is required for PDPN-mediated directional migration and regulation of lamellipodia extension/stabilization during cell spreading and migration. Interacts with RDX, EZR and MSN. Interacts with EGFR. Interacts with CD74; this complex is essential for the MIF-induced signaling cascade that results in B cell survival. Proteolytically cleaved in the extracellular matrix by specific proteinases (possibly MMPs) in several cell lines and tumors. In terms of processing, N-glycosylated. Post-translationally, O-glycosylated; contains chondroitin sulfate glycans which can be more or less sulfated and whose number may affect the accessibility of specific proteinases to their cleavage site(s). It is uncertain if O-glycosylation occurs on Thr-637 or Thr-638. Phosphorylated; activation of PKC results in the dephosphorylation of Ser-706 (constitutive phosphorylation site), and the phosphorylation of Ser-672. In terms of tissue distribution, detected in fibroblasts and urine (at protein level). Detected in placenta (at protein level). Isoform 10 (epithelial isoform) is expressed by cells of epithelium and highly expressed by carcinomas. Expression is repressed in neuroblastoma cells.

The protein resides in the cell membrane. It localises to the cell projection. The protein localises to the microvillus. Its subcellular location is the secreted. In terms of biological role, cell-surface receptor that plays a role in cell-cell interactions, cell adhesion and migration, helping them to sense and respond to changes in the tissue microenvironment. Participates thereby in a wide variety of cellular functions including the activation, recirculation and homing of T-lymphocytes, hematopoiesis, inflammation and response to bacterial infection. Engages, through its ectodomain, extracellular matrix components such as hyaluronan/HA, collagen, growth factors, cytokines or proteases and serves as a platform for signal transduction by assembling, via its cytoplasmic domain, protein complexes containing receptor kinases and membrane proteases. Such effectors include PKN2, the RhoGTPases RAC1 and RHOA, Rho-kinases and phospholipase C that coordinate signaling pathways promoting calcium mobilization and actin-mediated cytoskeleton reorganization essential for cell migration and adhesion. This chain is CD44 antigen (CD44), found in Homo sapiens (Human).